The primary structure comprises 810 residues: MATNSTKACPAPMKATSNGVFQGDNPIDFALPLAILQIVIVIVLTRVLAYLLRPLRQPRVIAEVIGGIMLGPSLLGRSKAFLDAVFPKKSLTVLETLANLGLLFFLFLAGLEIDTKALRRTGKKALGIALAGITLPFALGIGSSFVLKATISKGVNSTAFLVFMGVALSITAFPVLARILAELKLLTTEIGRLAMSAAAVNDVAAWILLALAIALSGSNTSPLVSLWVFLSGCAFVIGASFIIPPIFRWISRRCHEGEPIEETYICATLAVVLVCGFITDAIGIHSMFGAFVVGVLIPKEGPFAGALVEKVEDLVSGLFLPLYFVASGLKTNVATIQGAQSWGLLVLVTATACFGKILGTLGVSLAFKIPMREAITLGFLMNTKGLVELIVLNIGKDRKVLNDQTFAIMVLMALFTTFITTPVVMAVYKPARRAKKEGEYKHRAVERENTNTQLRILTCFHGAGSIPSMINLLEASRGIEKGEGLCVYALHLRELSERSSAILMVHKVRKNGMPFWNRRGVNADADQVVVAFQAFQQLSRVNVRPMTAISSMSDIHEDICTTAVRKKAAIVILPFHKHQQLDGSLETTRGDYRWVNRRVLLQAPCSVGIFVDRGLGGSSQVSAQDVSYSVVVLFFGGPDDREALAYGLRMAEHPGIVLTVFRFVVSPERVGEIVNVEVSNNNNENQSVKNLKSDEEIMSEIRKISSVDESVKFVEKQIENAAVDVRSAIEEVRRSNLFLVGRMPGGEIALAIRENSECPELGPVGSLLISPESSTKASVLVIQQYNGTGIAPDLGAAETEVLTSTDKDSD.

A run of 12 helical transmembrane segments spans residues 29-49 (FALPLAILQIVIVIVLTRVLA), 59-76 (RVIAEVIGGIMLGPSLLG), 91-111 (LTVLETLANLGLLFFLFLAGL), 126-146 (LGIALAGITLPFALGIGSSFV), 157-177 (STAFLVFMGVALSITAFPVLA), 193-213 (LAMSAAAVNDVAAWILLALAI), 223-243 (LVSLWVFLSGCAFVIGASFII), 277-297 (FITDAIGIHSMFGAFVVGVLI), 314-334 (LVSGLFLPLYFVASGLKTNVA), 343-363 (GLLVLVTATACFGKILGTLGV), 374-394 (AITLGFLMNTKGLVELIVLNI), and 406-426 (FAIMVLMALFTTFITTPVVMA). Serine 804 carries the post-translational modification Phosphoserine.

This sequence belongs to the monovalent cation:proton antiporter 2 (CPA2) transporter (TC 2.A.37) family. CHX (TC 2.A.37.4) subfamily. In terms of tissue distribution, expressed in roots.

The protein resides in the membrane. Functionally, may operate as a cation/H(+) antiporter. This is Cation/H(+) antiporter 18 (CHX18) from Arabidopsis thaliana (Mouse-ear cress).